The primary structure comprises 805 residues: Chloride channel protein (805 aa).

Residues 1 to 48 lie on the Cytoplasmic side of the membrane; sequence MSHEKNEASGYPEAQSWKSQEAMLGARTEVSRWRAVKNCLYRHLVKVL. Transmembrane regions (helical) follow at residues 49 to 86 and 93 to 116; these read GEDW…LFAL and LQYL…CQIV. A Selectivity filter part_1 motif is present at residues 122–126; sequence GSGIP. Ser-123 is a chloride binding site. Residues 125–132 constitute an intramembrane region (helical); sequence IPELKTII. 2 helical membrane passes run 141 to 159 and 166 to 184; these read LTLR…ALSA and EGPF…NQLL. The Selectivity filter part_2 signature appears at 164–168; it reads GKEGP. Intramembrane regions (helical) lie at residues 201 to 213 and 217 to 225; these read ILTV…ISCC and PLAGVLFSI. Helical transmembrane passes span 237-256, 283-311, and 320-339; these read YWRG…VLSV, MPAF…IVFM, and ILKK…LATL. Asn-365 carries an N-linked (GlcNAc...) asparagine glycan. 2 consecutive transmembrane segments (helical) span residues 388 to 408 and 416 to 439; these read LNIF…AALA and GAFV…MALL. Residues 416-420 carry the Selectivity filter part_3 motif; that stretch reads GAFVP. Residue Phe-418 participates in chloride binding. An intramembrane region (helical) is located at residues 456 to 470; that stretch reads GEYAVIGAAAMTGAV. The note=Loop between two helices intramembrane region spans 471–472; sequence TH. An intramembrane region (helical) is located at residues 473 to 484; that stretch reads AVSTAVICFELT. The note=Loop between two helices intramembrane region spans 485-489; that stretch reads GQISH. Residues 490 to 507 traverse the membrane as a helical segment; that stretch reads VLPMMVAVILANMVAQGL. The Cytoplasmic portion of the chain corresponds to 508 to 805; it reads QPSLYDSIIQ…RTATSNSSGK (298 aa). Tyr-512 contributes to the chloride binding site. Residues 543-601 form the CBS 1 domain; sequence MVRDVTSIASTSTYGDLLHVLRQTKLKFFPFVDTPDTNTLLGSIDRTEVEGLLQRRISA. Disordered stretches follow at residues 606 to 625 and 653 to 684; these read PAAA…GASF and KVQT…QKGT. One can recognise a CBS 2 domain in the interval 719–776; it reads IDQSPFQLVEGTSLQKTHTLFSLLGLDRAYVTSMGKLVGVVALAEIQAAIEGSYQKGF.

It belongs to the chloride channel (TC 2.A.49) family. ClC-0 subfamily. Homodimer. Each subunit contains a channel ('Double barreled channel').

The protein localises to the membrane. In terms of biological role, voltage-gated chloride channel. This channel is thought to ensure the high conductance of the non-innervated membrane of the electrocyte necessary for efficient current generation caused by sodium influx through the acetylcholine receptor at the innervated membrane. In Torpedo marmorata (Marbled electric ray), this protein is Chloride channel protein.